Here is a 268-residue protein sequence, read N- to C-terminus: Shikimate dehydrogenase (NADP(+)) (268 aa).

Residues 15–17 (SKS) and T60 contribute to the shikimate site. K64 functions as the Proton acceptor in the catalytic mechanism. Shikimate-binding residues include N85 and D101. Residues 121–125 (GAGGS) and L208 each bind NADP(+). Y210 is a binding site for shikimate. G230 lines the NADP(+) pocket.

It belongs to the shikimate dehydrogenase family. As to quaternary structure, homodimer.

The catalysed reaction is shikimate + NADP(+) = 3-dehydroshikimate + NADPH + H(+). It functions in the pathway metabolic intermediate biosynthesis; chorismate biosynthesis; chorismate from D-erythrose 4-phosphate and phosphoenolpyruvate: step 4/7. Functionally, involved in the biosynthesis of the chorismate, which leads to the biosynthesis of aromatic amino acids. Catalyzes the reversible NADPH linked reduction of 3-dehydroshikimate (DHSA) to yield shikimate (SA). The sequence is that of Shikimate dehydrogenase (NADP(+)) from Helicobacter hepaticus (strain ATCC 51449 / 3B1).